A 254-amino-acid chain; its full sequence is Triosephosphate isomerase (254 aa).

Substrate is bound at residue 9–11 (NWK). His98 functions as the Electrophile in the catalytic mechanism. Glu170 serves as the catalytic Proton acceptor. Residues Gly176, Ser215, and 236-237 (GG) contribute to the substrate site.

The protein belongs to the triosephosphate isomerase family. As to quaternary structure, homodimer.

It localises to the cytoplasm. It carries out the reaction D-glyceraldehyde 3-phosphate = dihydroxyacetone phosphate. The protein operates within carbohydrate biosynthesis; gluconeogenesis. Its pathway is carbohydrate degradation; glycolysis; D-glyceraldehyde 3-phosphate from glycerone phosphate: step 1/1. Its function is as follows. Involved in the gluconeogenesis. Catalyzes stereospecifically the conversion of dihydroxyacetone phosphate (DHAP) to D-glyceraldehyde-3-phosphate (G3P). The chain is Triosephosphate isomerase from Buchnera aphidicola subsp. Cinara cedri (strain Cc).